An 87-amino-acid chain; its full sequence is MRIKGVVLSYRRSKENQHTNVMIIKPLNVNSREEASKLIGRLVIWKSPSGKLLKGKIVRVHGTKGAVRARFEKGLPGQALGDYVEII.

This sequence belongs to the eukaryotic ribosomal protein eL33 family.

The polypeptide is Large ribosomal subunit protein eL33 (Pyrococcus abyssi (strain GE5 / Orsay)).